The following is a 565-amino-acid chain: Dihydroxy-acid dehydratase (565 aa).

Asp83 contributes to the Mg(2+) binding site. [2Fe-2S] cluster is bound at residue Cys124. Residues Asp125 and Lys126 each contribute to the Mg(2+) site. N6-carboxylysine is present on Lys126. Cys197 serves as a coordination point for [2Fe-2S] cluster. Residue Glu451 coordinates Mg(2+). Ser477 acts as the Proton acceptor in catalysis.

The protein belongs to the IlvD/Edd family. As to quaternary structure, homodimer. It depends on [2Fe-2S] cluster as a cofactor. Mg(2+) serves as cofactor.

It catalyses the reaction (2R)-2,3-dihydroxy-3-methylbutanoate = 3-methyl-2-oxobutanoate + H2O. The enzyme catalyses (2R,3R)-2,3-dihydroxy-3-methylpentanoate = (S)-3-methyl-2-oxopentanoate + H2O. It functions in the pathway amino-acid biosynthesis; L-isoleucine biosynthesis; L-isoleucine from 2-oxobutanoate: step 3/4. Its pathway is amino-acid biosynthesis; L-valine biosynthesis; L-valine from pyruvate: step 3/4. Functions in the biosynthesis of branched-chain amino acids. Catalyzes the dehydration of (2R,3R)-2,3-dihydroxy-3-methylpentanoate (2,3-dihydroxy-3-methylvalerate) into 2-oxo-3-methylpentanoate (2-oxo-3-methylvalerate) and of (2R)-2,3-dihydroxy-3-methylbutanoate (2,3-dihydroxyisovalerate) into 2-oxo-3-methylbutanoate (2-oxoisovalerate), the penultimate precursor to L-isoleucine and L-valine, respectively. In Symbiobacterium thermophilum (strain DSM 24528 / JCM 14929 / IAM 14863 / T), this protein is Dihydroxy-acid dehydratase.